A 192-amino-acid chain; its full sequence is Molybdenum cofactor guanylyltransferase (192 aa).

Residues 10–12 (LAG), Lys-23, Asn-51, Asp-69, and Asp-99 contribute to the GTP site. Asp-99 lines the Mg(2+) pocket.

The protein belongs to the MobA family. As to quaternary structure, monomer. Requires Mg(2+) as cofactor.

Its subcellular location is the cytoplasm. It catalyses the reaction Mo-molybdopterin + GTP + H(+) = Mo-molybdopterin guanine dinucleotide + diphosphate. In terms of biological role, transfers a GMP moiety from GTP to Mo-molybdopterin (Mo-MPT) cofactor (Moco or molybdenum cofactor) to form Mo-molybdopterin guanine dinucleotide (Mo-MGD) cofactor. The sequence is that of Molybdenum cofactor guanylyltransferase from Haemophilus influenzae (strain ATCC 51907 / DSM 11121 / KW20 / Rd).